We begin with the raw amino-acid sequence, 330 residues long: Lactamase-like protein nscB (330 aa).

4 residues coordinate Zn(2+): His97, His99, Asp101, and His102. The Proton donor/acceptor role is filled by Asp101.

This sequence belongs to the metallo-beta-lactamase superfamily. It depends on Zn(2+) as a cofactor.

It functions in the pathway secondary metabolite biosynthesis. Its function is as follows. Lactamase-like protein; part of the gene cluster that mediates the biosynthesis of neosartoricin, a prenylated anthracenone that exhibits T-cell antiproliferative activity, suggestive of a physiological role as an immunosuppressive agent. The non-reducing polyketide synthase nscA probably synthesizes and cyclizes the decaketide backbone. The hydrolase nscB then mediates the product release through hydrolysis followed by spontaneous decarboxylation. The prenyltransferase nscD catalyzes the addition of the dimethylallyl group to the aromatic C5. The FAD-dependent monooxygenase nscC is then responsible for the stereospecific hydroxylation at C2. There is no gene encoding O-acetyltransferase in the nsc gene cluster; thus, the last step of 2-O-acetylation leading to neosartoricin may be catalyzed by an unidentified O-acetyltransferase. The protein is Lactamase-like protein nscB of Aspergillus fumigatus (strain ATCC MYA-4609 / CBS 101355 / FGSC A1100 / Af293) (Neosartorya fumigata).